The sequence spans 111 residues: Fluoride-specific ion channel FluC 3 (111 aa).

Helical transmembrane passes span 26–46 (IPAG…LLTF), 53–73 (VVYL…TFAY), and 91–111 (IFLN…ALML). Gly-63 and Thr-66 together coordinate Na(+).

This sequence belongs to the fluoride channel Fluc/FEX (TC 1.A.43) family.

It localises to the cell membrane. The catalysed reaction is fluoride(in) = fluoride(out). Na(+) is not transported, but it plays an essential structural role and its presence is essential for fluoride channel function. Its function is as follows. Fluoride-specific ion channel. Important for reducing fluoride concentration in the cell, thus reducing its toxicity. This is Fluoride-specific ion channel FluC 3 from Methanosarcina acetivorans (strain ATCC 35395 / DSM 2834 / JCM 12185 / C2A).